We begin with the raw amino-acid sequence, 98 residues long: NADH-ubiquinone oxidoreductase chain 4L (98 aa).

Helical transmembrane passes span 1-21, 29-49, and 61-81; these read MSMV…GLLM, SLLC…ITIM, and IILL…LVMI.

It belongs to the complex I subunit 4L family. As to quaternary structure, core subunit of respiratory chain NADH dehydrogenase (Complex I) which is composed of 45 different subunits.

The protein resides in the mitochondrion inner membrane. It catalyses the reaction a ubiquinone + NADH + 5 H(+)(in) = a ubiquinol + NAD(+) + 4 H(+)(out). Core subunit of the mitochondrial membrane respiratory chain NADH dehydrogenase (Complex I) which catalyzes electron transfer from NADH through the respiratory chain, using ubiquinone as an electron acceptor. Part of the enzyme membrane arm which is embedded in the lipid bilayer and involved in proton translocation. The chain is NADH-ubiquinone oxidoreductase chain 4L (MT-ND4L) from Procyon lotor (Raccoon).